Reading from the N-terminus, the 473-residue chain is Knob-associated histidine-rich protein (473 aa).

The first 34 residues, 1–34 (MKSFKNKNTLRRKKAFPVFTKILLVSFLVWVLKC), serve as a signal peptide directing secretion. The N-linked (GlcNAc...) asparagine glycan is linked to Asn42. Basic residues predominate over residues 57–87 (AQKQHEHHHHHHHQHQHQHQAPHQAHHHHHH). 2 disordered regions span residues 57-143 (AQKQ…QVFR) and 347-473 (SSVN…DGSK). Positions 95–104 (PQVHQQVHGQ) are enriched in low complexity. Positions 108 to 117 (HHHHHHHHHQ) are enriched in basic residues. Basic and acidic residues-rich tracts occupy residues 354–375 (KHGDEKHHSSKKHEGNDGEGEK) and 396–405 (KDNEDAESVK). Residues 406–422 (SKKHKSHDCEKKKSKKH) are compositionally biased toward basic residues. Composition is skewed to basic and acidic residues over residues 423-444 (KDNEDAESVKSKKSVKEKGEKH) and 453-473 (KTNEENKNKEKTNNLKSDGSK).

Its subcellular location is the secreted. Functionally, KAHRP might mimick human histidine-rich glycoproteins to anchor host thrombospondin or a parasite analog in a binding complex with the endothelial cell receptor. This chain is Knob-associated histidine-rich protein, found in Plasmodium falciparum.